Consider the following 1581-residue polypeptide: Mediator of RNA polymerase II transcription subunit 1 (1581 aa).

Positions 1 to 670 are interaction with the Mediator complex and THRA; the sequence is MKAQGETEES…YGSSPLERQN (670 aa). The interaction with ESR1 stretch occupies residues 16-590; it reads MSSLLERLHA…SIKDRHESVG (575 aa). Interaction with the Mediator complex regions lie at residues 108-212 and 215-390; these read FYVE…GYLT and SGGH…SLQG. Residues 405–644 are interaction with THRA; the sequence is PLILNLIRHQ…MAGNTKNHPM (240 aa). The interval 542–788 is interaction with VDR; sequence PASSPGYGMT…TDILSDIAEE (247 aa). Ser588 carries the phosphoserine modification. The LXXLL motif 1 motif lies at 604-608; the sequence is LTSLL. 4 disordered regions span residues 609-705, 791-819, 868-895, and 947-1566; these read QITG…HQTE, KLPS…QSTL, LSNS…DDFK, and EHHS…DFMI. Pro residues predominate over residues 622–632; it reads PTPPHHTPPPV. Residues 622–701 form an interaction with PPARGC1A and THRA region; sequence PTPPHHTPPP…SSRLPPEKPK (80 aa). The LXXLL motif 2 signature appears at 645-649; sequence LMNLL. Residues 655-675 are compositionally biased toward polar residues; the sequence is QDFSTLYGSSPLERQNSSSGS. The tract at residues 656 to 1065 is interaction with ESR1; it reads DFSTLYGSSP…TPPIPKITIQ (410 aa). Residue Ser664 is modified to Phosphoserine. The interval 681 to 715 is interaction with GATA1; sequence CSGSNKTKKKESSRLPPEKPKHQTEDDFQRELFSM. The segment covering 690–705 has biased composition (basic and acidic residues); that stretch reads KESSRLPPEKPKHQTE. A Phosphoserine modification is found at Ser794. Thr804 is subject to Phosphothreonine. Residues 807 to 819 show a composition bias toward polar residues; it reads RDSSSSGHSQSTL. Residues 874 to 901 carry the Integrase domain-binding motif (IBM) motif; the sequence is QSGFGEEYFDESSQSGDNDDFKGFASQA. 2 positions are modified to phosphoserine: Ser886 and Ser952. The segment covering 962–973 has biased composition (basic and acidic residues); the sequence is LGKEKTQKRVKE. The residue at position 1031 (Thr1031) is a Phosphothreonine; by MAPK1 or MAPK3. Low complexity predominate over residues 1033 to 1050; sequence PTSTGGSKSPGSSGRSQT. Phosphothreonine is present on residues Thr1050 and Thr1056. Low complexity-rich tracts occupy residues 1077-1093, 1100-1111, and 1119-1156; these read SSHS…SSGS, SSSSSSSSASTS, and SEGS…PGSS. Position 1156 is a phosphoserine (Ser1156). The segment covering 1162–1195 has biased composition (polar residues); the sequence is GLSSGSSSTKMKPQGKPSSLMNPSLSKPNISPSH. An N6-acetyllysine modification is found at Lys1177. Ser1207 is subject to Phosphoserine. Phosphothreonine is present on Thr1215. Low complexity-rich tracts occupy residues 1218 to 1227 and 1234 to 1293; these read SSKAKSPISS and MSGT…SKGK. Ser1223 is subject to Phosphoserine. The interaction with TP53 stretch occupies residues 1249-1421; that stretch reads LGSSGSLSQK…KPGESSGEGL (173 aa). Phosphoserine is present on Ser1302. The span at 1330–1345 shows a compositional bias: polar residues; it reads GVSTNSSSHPMSSKHN. The residue at position 1347 (Ser1347) is a Phosphoserine. The span at 1352–1364 shows a compositional bias: basic and acidic residues; it reads QGKREKSDKDKSK. Phosphoserine is present on residues Ser1403 and Ser1433. Polar residues-rich tracts occupy residues 1425–1440 and 1448–1482; these read MASS…SGST and PSHS…SPSS. The residue at position 1440 (Thr1440) is a Phosphothreonine. A Phosphothreonine; by MAPK1 or MAPK3 modification is found at Thr1457. Phosphoserine occurs at positions 1463, 1465, 1479, 1481, and 1482. Residues 1496–1505 show a composition bias toward basic residues; it reads KHKKHKKEKK. Over residues 1506-1522 the composition is skewed to basic and acidic residues; it reads KVKDKDRDRDRDKDRDK. At Lys1529 the chain carries N6-acetyllysine. Polar residues predominate over residues 1533–1552; the sequence is WSKSPISSDQSLSMTSNTIL.

It belongs to the Mediator complex subunit 1 family. Component of the Mediator complex, which is composed of MED1, MED4, MED6, MED7, MED8, MED9, MED10, MED11, MED12, MED13, MED13L, MED14, MED15, MED16, MED17, MED18, MED19, MED20, MED21, MED22, MED23, MED24, MED25, MED26, MED27, MED29, MED30, MED31, CCNC, CDK8 and CDC2L6/CDK11. The MED12, MED13, CCNC and CDK8 subunits form a distinct module termed the CDK8 module. Mediator containing the CDK8 module is less active than Mediator lacking this module in supporting transcriptional activation. Individual preparations of the Mediator complex lacking one or more distinct subunits have been variously termed ARC, CRSP, DRIP, PC2, SMCC and TRAP. This subunit specifically interacts with a number of nuclear receptors in a ligand-dependent fashion including AR, ESR1, ESR2, PPARA, PPARG, RORA, RXRA, RXRG, THRA, THRB and VDR. Interacts with CTNNB1, GABPA, GLI3, PPARGC1A and TP53. Interacts with GATA1 and YWHAH. Interacts with CLOCK; this interaction requires the presence of THRAP3. Interacts with CCAR1. Interacts with NR4A3. Interacts (via IBM motif) with PSIP1 (via IBD domain); phosphorylation increases its affinity for PSIP1. Interacts with USP22. Post-translationally, phosphorylated by MAPK1 or MAPK3 during G2/M phase which may enhance protein stability and promote entry into the nucleolus. Phosphorylation increases its interaction with PSIP1.

It is found in the nucleus. Its function is as follows. Component of the Mediator complex, a coactivator involved in the regulated transcription of nearly all RNA polymerase II-dependent genes. Mediator functions as a bridge to convey information from gene-specific regulatory proteins to the basal RNA polymerase II transcription machinery. Mediator is recruited to promoters by direct interactions with regulatory proteins and serves as a scaffold for the assembly of a functional preinitiation complex with RNA polymerase II and the general transcription factors. Acts as a coactivator for GATA1-mediated transcriptional activation during erythroid differentiation of K562 erythroleukemia cells. This chain is Mediator of RNA polymerase II transcription subunit 1 (MED1), found in Pongo abelii (Sumatran orangutan).